We begin with the raw amino-acid sequence, 249 residues long: Sec-independent protein translocase protein TatC (249 aa).

Helical transmembrane passes span 18 to 38 (VSVG…KNIF), 69 to 89 (AIVI…APGL), 96 to 116 (VILP…AFSY), 151 to 171 (LILG…LAKV), 187 to 207 (IVVI…SQIF), and 208 to 228 (MALP…MVNP).

This sequence belongs to the TatC family. The Tat system comprises two distinct complexes: a TatABC complex, containing multiple copies of TatA, TatB and TatC subunits, and a separate TatA complex, containing only TatA subunits. Substrates initially bind to the TatABC complex, which probably triggers association of the separate TatA complex to form the active translocon.

It localises to the cell inner membrane. Part of the twin-arginine translocation (Tat) system that transports large folded proteins containing a characteristic twin-arginine motif in their signal peptide across membranes. Together with TatB, TatC is part of a receptor directly interacting with Tat signal peptides. The polypeptide is Sec-independent protein translocase protein TatC (Helicobacter pylori (strain J99 / ATCC 700824) (Campylobacter pylori J99)).